The primary structure comprises 244 residues: Maintenance of ploidy protein mob2 (244 aa).

Positions 14–45 (NRSKRHQNLSDASSSSGSFSKKSSTSQLVRTG) are disordered. The span at 23 to 39 (SDASSSSGSFSKKSSTS) shows a compositional bias: low complexity. Residues Ser46 and Ser48 each carry the phosphoserine modification.

Belongs to the MOB1/phocein family. In terms of assembly, interacts with orb6.

Its subcellular location is the cytoplasm. The protein resides in the cell cortex. Functionally, required for coordinating polarized cell growth during interphase with the onset of mitosis. This chain is Maintenance of ploidy protein mob2 (mob2), found in Schizosaccharomyces pombe (strain 972 / ATCC 24843) (Fission yeast).